Here is a 144-residue protein sequence, read N- to C-terminus: uncharacterized protein (144 aa).

The HTH lysR-type domain occupies 1-58 (MDLASLNAFIAVAETGSFSEAGERLHLTQPAVSKRIAALEQQLQVRLFDRLGREVRLT). Positions 18 to 38 (FSEAGERLHLTQPAVSKRIAA) form a DNA-binding region, H-T-H motif.

Belongs to the LysR transcriptional regulatory family.

This is an uncharacterized protein from Azotobacter vinelandii.